Consider the following 309-residue polypeptide: Clotting factor G beta subunit (309 aa).

The first 31 residues, 1–31, serve as a signal peptide directing secretion; it reads MDISFLVFITLSMALFSSNVTGTSVTSRVRR. 4 disulfides stabilise this stretch: cysteine 38–cysteine 158, cysteine 74–cysteine 90, cysteine 205–cysteine 227, and cysteine 238–cysteine 268. One can recognise a Peptidase S1 domain in the interval 47–292; the sequence is IIGGGIATPH…YVNWLQEITF (246 aa). Histidine 89 acts as the Charge relay system in catalysis. N-linked (GlcNAc...) asparagine glycosylation occurs at asparagine 100. Residue aspartate 138 is the Charge relay system of the active site. N-linked (GlcNAc...) asparagine glycosylation is present at asparagine 206. Serine 242 (charge relay system) is an active-site residue.

It belongs to the peptidase S1 family. Clotting factor G is a heterodimer composed of two non-covalently associated subunits, alpha and beta. Upon activation, converted to a two-chain active form linked by a disulfide bond. Forms a covalent heterodimer with intracellular coagulation inhibitor 3/LICI-3. In terms of tissue distribution, expressed in the hemocytes (at protein level).

It carries out the reaction Selective cleavage of 98-Arg-|-Ile-99 bond in Limulus proclotting enzyme to form active clotting enzyme.. Binding to (1-&gt;3)-beta-D-glucan to alpha subunit, induces autocatalysis and activation of beta subunit. Inhibited by intracellular coagulation inhibitor 3/LICI-3 and to a lesser extend by intracellular coagulation inhibitor 2/LICI-2. Functionally, component of the heterodimer clotting factor G which may play a role in defense mechanisms against fungi. Initiates a (1-&gt;3)-beta-glucan-sensing clotting pathway whereby the alpha subunit binds to glucans containing (1-&gt;3)-beta linkages, which are components of the fungal cell wall, and the beta subunit catalyzes the activation of proclotting enzyme. This is Clotting factor G beta subunit from Tachypleus tridentatus (Japanese horseshoe crab).